Reading from the N-terminus, the 387-residue chain is MNIHEYQAKAIFADNSIPTLKGKVAFSVDEAVANAKELGGSVWAVKAQIHAGGRGLGGGVKIAKNLDEVKDYASKILGMNLVTHQTGPEGKLVQKLYIESGANIVKEYYLAILFNRMAEQITIIASSEGGMDIEKVAKESPEKIAKVGIDPQIGFKMFHGLEVAKVLGLDKDESKKLISMIAKLYKLYMDKDMNMLEINPLIKTAEGDFYALDAKCSFDDSALYRHPEIAELRDITEENPAEREAAEFGLSYVKLDGDVACMVNGAGLAMATMDIINYSGAKPANFLDVGGGASAETVAKAFEIILRDKNVKVIFINIFGGIVRCDRIANGILEATKNVEVNIPIVVRLDGTNAAEAKTILDNSNLKNIKAATNLKNGAELVKSLVG.

Residues lysine 46, 53 to 55, glutamate 99, alanine 102, and glutamate 107 each bind ATP; that span reads GRG. 2 residues coordinate Mg(2+): asparagine 199 and aspartate 213. Substrate is bound by residues asparagine 264 and 321–323; that span reads GIV.

This sequence belongs to the succinate/malate CoA ligase beta subunit family. In terms of assembly, heterotetramer of two alpha and two beta subunits. Mg(2+) is required as a cofactor.

The enzyme catalyses succinate + ATP + CoA = succinyl-CoA + ADP + phosphate. It catalyses the reaction GTP + succinate + CoA = succinyl-CoA + GDP + phosphate. It functions in the pathway carbohydrate metabolism; tricarboxylic acid cycle; succinate from succinyl-CoA (ligase route): step 1/1. Succinyl-CoA synthetase functions in the citric acid cycle (TCA), coupling the hydrolysis of succinyl-CoA to the synthesis of either ATP or GTP and thus represents the only step of substrate-level phosphorylation in the TCA. The beta subunit provides nucleotide specificity of the enzyme and binds the substrate succinate, while the binding sites for coenzyme A and phosphate are found in the alpha subunit. The chain is Succinate--CoA ligase [ADP-forming] subunit beta from Campylobacter jejuni subsp. jejuni serotype O:23/36 (strain 81-176).